The following is a 255-amino-acid chain: MTIKVIIAGFKGKMGSTAVEMVKGDAALSLAALVDPFATETEVDGVPVFKTKEEVASLEADVWVDFTTPKFTYENTRFALENGFAPVVGTTGFTPEEIEELTALSAEKGLGGLIAPNFAIGAILLMQFAAQAAKYFPNLEIIELHHDKKKDAPSGTAVKTAELISQVRQSQTQGAADEEELIAGARGAAFDGFRIHSVRLPGLVAHQEVIFGAQGEGLTIRHDSYDRISFMGGVNLGIKEVVKRSQLVYGLEHLL.

Residues 9 to 14, 89 to 91, and 115 to 118 each bind NAD(+); these read GFKGKM, GTT, and APNF. His-145 acts as the Proton donor/acceptor in catalysis. Residue His-146 participates in (S)-2,3,4,5-tetrahydrodipicolinate binding. Lys-149 serves as the catalytic Proton donor. Position 155–156 (155–156) interacts with (S)-2,3,4,5-tetrahydrodipicolinate; the sequence is GT.

This sequence belongs to the DapB family.

The protein localises to the cytoplasm. The enzyme catalyses (S)-2,3,4,5-tetrahydrodipicolinate + NAD(+) + H2O = (2S,4S)-4-hydroxy-2,3,4,5-tetrahydrodipicolinate + NADH + H(+). The catalysed reaction is (S)-2,3,4,5-tetrahydrodipicolinate + NADP(+) + H2O = (2S,4S)-4-hydroxy-2,3,4,5-tetrahydrodipicolinate + NADPH + H(+). It participates in amino-acid biosynthesis; L-lysine biosynthesis via DAP pathway; (S)-tetrahydrodipicolinate from L-aspartate: step 4/4. In terms of biological role, catalyzes the conversion of 4-hydroxy-tetrahydrodipicolinate (HTPA) to tetrahydrodipicolinate. In Streptococcus suis (strain 98HAH33), this protein is 4-hydroxy-tetrahydrodipicolinate reductase.